The primary structure comprises 91 residues: Small ribosomal subunit protein uS15 (91 aa).

Belongs to the universal ribosomal protein uS15 family. Part of the 30S ribosomal subunit. Forms a bridge to the 50S subunit in the 70S ribosome, contacting the 23S rRNA.

In terms of biological role, one of the primary rRNA binding proteins, it binds directly to 16S rRNA where it helps nucleate assembly of the platform of the 30S subunit by binding and bridging several RNA helices of the 16S rRNA. Its function is as follows. Forms an intersubunit bridge (bridge B4) with the 23S rRNA of the 50S subunit in the ribosome. This Hydrogenobaculum sp. (strain Y04AAS1) protein is Small ribosomal subunit protein uS15.